Here is a 325-residue protein sequence, read N- to C-terminus: Putative [LysW]-lysine/[LysW]-ornithine hydrolase (325 aa).

Residue His-66 participates in Zn(2+) binding. Residue Asp-68 is part of the active site. Residue Asp-90 participates in Zn(2+) binding. Glu-117 (proton acceptor) is an active-site residue. The Zn(2+) site is built by Glu-118, Glu-139, and His-297.

The protein belongs to the peptidase M20A family. LysK subfamily. Zn(2+) is required as a cofactor. Requires Co(2+) as cofactor.

Its subcellular location is the cytoplasm. The catalysed reaction is [amino-group carrier protein]-C-terminal-gamma-(L-lysyl)-L-glutamate + H2O = [amino-group carrier protein]-C-terminal-L-glutamate + L-lysine. It carries out the reaction [amino-group carrier protein]-C-terminal-gamma-(L-ornithyl)-L-glutamate + H2O = [amino-group carrier protein]-C-terminal-L-glutamate + L-ornithine. Its pathway is amino-acid biosynthesis; L-lysine biosynthesis via AAA pathway; L-lysine from L-alpha-aminoadipate (Thermus route): step 5/5. The protein operates within amino-acid biosynthesis; L-arginine biosynthesis. Functionally, catalyzes the release of L-lysine from [LysW]-gamma-L-lysine and the release of L-ornithine from [LysW]-L-ornithine. The chain is Putative [LysW]-lysine/[LysW]-ornithine hydrolase from Pyrococcus horikoshii (strain ATCC 700860 / DSM 12428 / JCM 9974 / NBRC 100139 / OT-3).